The sequence spans 121 residues: Replication protein A 14 kDa subunit (121 aa).

Val2 bears the N-acetylvaline mark. Glycyl lysine isopeptide (Lys-Gly) (interchain with G-Cter in ubiquitin) cross-links involve residues Lys23, Lys39, and Lys88.

This sequence belongs to the replication factor A protein 3 family. In terms of assembly, component of the canonical replication protein A complex (RPA), a heterotrimer composed of RPA1, RPA2 and RPA3. Also a component of the aRPA, the alternative replication protein A complex, a trimeric complex similar to the replication protein A complex/RPA but where RPA1 and RPA3 are associated with RPA4 instead of RPA2. Interacts with BRIP1/FANCJ via the RPA1 subunit; following DNA damage they colocalize in foci in the nucleus. Post-translationally, ubiquitinated by RFWD3 at stalled replication forks in response to DNA damage: ubiquitination by RFWD3 does not lead to degradation by the proteasome and promotes removal of the RPA complex from stalled replication forks, promoting homologous recombination.

Its subcellular location is the nucleus. In terms of biological role, as part of the heterotrimeric replication protein A complex (RPA/RP-A), binds and stabilizes single-stranded DNA intermediates that form during DNA replication or upon DNA stress. It prevents their reannealing and in parallel, recruits and activates different proteins and complexes involved in DNA metabolism. Thereby, it plays an essential role both in DNA replication and the cellular response to DNA damage. In the cellular response to DNA damage, the RPA complex controls DNA repair and DNA damage checkpoint activation. Through recruitment of ATRIP activates the ATR kinase a master regulator of the DNA damage response. It is required for the recruitment of the DNA double-strand break repair factors RAD51 and RAD52 to chromatin, in response to DNA damage. Also recruits to sites of DNA damage proteins like XPA and XPG that are involved in nucleotide excision repair and is required for this mechanism of DNA repair. Also plays a role in base excision repair (BER), probably through interaction with UNG. RPA stimulates 5'-3' helicase activity of BRIP1/FANCJ. Also recruits SMARCAL1/HARP, which is involved in replication fork restart, to sites of DNA damage. May also play a role in telomere maintenance. RPA3 has its own single-stranded DNA-binding activity and may be responsible for polarity of the binding of the complex to DNA. As part of the alternative replication protein A complex, aRPA, binds single-stranded DNA and probably plays a role in DNA repair. Compared to the RPA2-containing, canonical RPA complex, may not support chromosomal DNA replication and cell cycle progression through S-phase. The aRPA may not promote efficient priming by DNA polymerase alpha but could support DNA synthesis by polymerase delta in presence of PCNA and replication factor C (RFC), the dual incision/excision reaction of nucleotide excision repair and RAD51-dependent strand exchange. In Homo sapiens (Human), this protein is Replication protein A 14 kDa subunit (RPA3).